Here is a 379-residue protein sequence, read N- to C-terminus: Probable 3-phenylpropionic acid transporter (379 aa).

The Cytoplasmic portion of the chain corresponds to 1-4 (MVLQ). A helical transmembrane segment spans residues 5–31 (STRWLALGYFTYFFSYGIFLPFWSVWL). Residues 32–37 (KGIGLT) are Periplasmic-facing. The chain crosses the membrane as a helical span at residues 38–66 (PETIGLLLGAGLVARFLGSLLIAPRVSDP). The Cytoplasmic segment spans residues 67-70 (SRLI). A helical membrane pass occupies residues 71–96 (SALRVLALLTLLFAVAFWAGAHVAWL). Over 97-100 (MLVM) the chain is Periplasmic. Residues 101 to 118 (IGFNLFFSPLVPLTDALA) traverse the membrane as a helical segment. Topologically, residues 119-129 (NTWQKQFPLDY) are cytoplasmic. Residues 130–152 (GKVRLWGSVAFVIGSALTGKLVT) form a helical membrane-spanning segment. At 153 to 155 (MFD) the chain is on the periplasmic side. The chain crosses the membrane as a helical span at residues 156–175 (YRVILALLTLGVASMLLGFL). Residues 176 to 207 (IRPTIQPQGASRQQESTGWSAWLALVRQNWRF) are Cytoplasmic-facing. Residues 208-227 (LACVCLLQGAHAAYYGFSAI) traverse the membrane as a helical segment. Topologically, residues 228 to 231 (YWQA) are periplasmic. A helical transmembrane segment spans residues 232-256 (AGYSASAVGYLWSLGVVAEVIIFAL). The Cytoplasmic portion of the chain corresponds to 257-266 (SNKLFRRCSA). The chain crosses the membrane as a helical span at residues 267–286 (RDMLLISAICGVVRWGIMGA). Topologically, residues 287-289 (TTA) are periplasmic. The helical transmembrane segment at 290–312 (LPWLIVVQILHCGTFTVCHLAAM) threads the bilayer. At 313–323 (RYIAARQGSEV) the chain is on the cytoplasmic side. The helical transmembrane segment at 324-351 (IRLQAVYSAVAMGGSIAIMTVFAGFLYQ) threads the bilayer. At 352–354 (YLG) the chain is on the periplasmic side. A helical transmembrane segment spans residues 355–375 (HGVFWVMALVALPAMFLRPKV). At 376 to 379 (VPSC) the chain is on the cytoplasmic side.

The protein belongs to the major facilitator superfamily. Phenyl propionate permease (PPP) (TC 2.A.1.27) family.

Its subcellular location is the cell inner membrane. Functionally, probable permease involved in the uptake of 3-phenylpropionic acid. In Escherichia coli (strain K12), this protein is Probable 3-phenylpropionic acid transporter (hcaT).